A 342-amino-acid chain; its full sequence is uncharacterized protein (342 aa).

This is an uncharacterized protein from Acanthamoeba polyphaga (Amoeba).